Reading from the N-terminus, the 1887-residue chain is Fatty acid synthase subunit alpha (1887 aa).

A Glycyl lysine isopeptide (Lys-Gly) (interchain with G-Cter in ubiquitin) cross-link involves residue Lys-37. Ser-50 is modified (phosphoserine). Positions 96 to 120 are disordered; it reads ELAAKEEPAKEEAPAPTPAASAPAP. The segment covering 98–108 has biased composition (basic and acidic residues); it reads AAKEEPAKEEA. One can recognise a Carrier domain in the interval 145–220; sequence VKASLLLHVL…ETFQDTFSGA (76 aa). Ser-180 is subject to O-(pantetheine 4'-phosphoryl)serine. Ser-523 bears the Phosphoserine mark. Positions 675–874 are beta-ketoacyl reductase; it reads DKYVLITGAG…CGAIIGWTRG (200 aa). Ser-958 carries the post-translational modification Phosphoserine. A Ketosynthase family 3 (KS3) domain is found at 1123–1657; that stretch reads QEVIVEEDLE…QKGGQAIVVH (535 aa). The For beta-ketoacyl synthase activity role is filled by Cys-1305. A Phosphoserine modification is found at Ser-1440. Catalysis depends on for beta-ketoacyl synthase activity residues His-1542 and His-1583. Positions 1772, 1773, and 1774 each coordinate Mg(2+). Acetyl-CoA is bound by residues 1772–1774, Tyr-1798, Ser-1808, 1817–1827, 1841–1844, and 1871–1873; these read DVE, EAVFKSLGVKS, RVNK, and ISH. Mg(2+) is bound by residues Ser-1872 and His-1873.

The protein belongs to the thiolase-like superfamily. Fungal fatty acid synthetase subunit alpha family. In terms of assembly, [Alpha(6)beta(6)] hexamers of two multifunctional subunits (alpha and beta). Post-translationally, 4'-phosphopantetheine is transferred from CoA to a specific serine of the Acyl carrier domain by the C-terminal PPT domain. This modification is essential for activity because fatty acids are bound in thioester linkage to the sulfhydryl of the prosthetic group.

The catalysed reaction is acetyl-CoA + n malonyl-CoA + 2n NADPH + 4n H(+) = a long-chain-acyl-CoA + n CoA + n CO2 + 2n NADP(+).. It carries out the reaction a fatty acyl-[ACP] + malonyl-[ACP] + H(+) = a 3-oxoacyl-[ACP] + holo-[ACP] + CO2. The enzyme catalyses a (3R)-hydroxyacyl-[ACP] + NADP(+) = a 3-oxoacyl-[ACP] + NADPH + H(+). Its activity is regulated as follows. Inhibited by cerulenin by covalent binding to active site of the ketoacyl synthase (KS) region. In terms of biological role, fatty acid synthetase catalyzes the formation of long-chain fatty acids from acetyl-CoA, malonyl-CoA and NADPH. The alpha subunit contains domains for: acyl carrier protein, 3-oxoacyl-[acyl-carrier-protein] reductase, and 3-oxoacyl-[acyl-carrier-protein] synthase. This subunit coordinates the binding of the six beta subunits to the enzyme complex. This chain is Fatty acid synthase subunit alpha (FAS2), found in Saccharomyces cerevisiae (strain ATCC 204508 / S288c) (Baker's yeast).